An 88-amino-acid polypeptide reads, in one-letter code: Elongation factor 1-beta (88 aa).

Belongs to the EF-1-beta/EF-1-delta family.

Functionally, promotes the exchange of GDP for GTP in EF-1-alpha/GDP, thus allowing the regeneration of EF-1-alpha/GTP that could then be used to form the ternary complex EF-1-alpha/GTP/AAtRNA. The sequence is that of Elongation factor 1-beta (ef1b) from Archaeoglobus fulgidus (strain ATCC 49558 / DSM 4304 / JCM 9628 / NBRC 100126 / VC-16).